Reading from the N-terminus, the 145-residue chain is uncharacterized protein (145 aa).

Residues 97–117 (ISMLLLIVIIAIGLTISYMVI) traverse the membrane as a helical segment.

The protein localises to the membrane. This is an uncharacterized protein from Methanocaldococcus jannaschii (strain ATCC 43067 / DSM 2661 / JAL-1 / JCM 10045 / NBRC 100440) (Methanococcus jannaschii).